Here is a 234-residue protein sequence, read N- to C-terminus: Opacity protein opA56 (234 aa).

Residue A1 is a signal peptide.

Belongs to the opacity porin family.

It is found in the cell outer membrane. Implicated in a number of adherence functions. OPA proteins are implicated in pathogenesis and are subject to phase variation. In Neisseria gonorrhoeae, this protein is Opacity protein opA56 (opaF).